Reading from the N-terminus, the 239-residue chain is 1-(5-phosphoribosyl)-5-[(5-phosphoribosylamino)methylideneamino] imidazole-4-carboxamide isomerase (239 aa).

Catalysis depends on Asp8, which acts as the Proton acceptor. Catalysis depends on Asp129, which acts as the Proton donor.

Belongs to the HisA/HisF family.

The protein localises to the cytoplasm. It catalyses the reaction 1-(5-phospho-beta-D-ribosyl)-5-[(5-phospho-beta-D-ribosylamino)methylideneamino]imidazole-4-carboxamide = 5-[(5-phospho-1-deoxy-D-ribulos-1-ylimino)methylamino]-1-(5-phospho-beta-D-ribosyl)imidazole-4-carboxamide. It participates in amino-acid biosynthesis; L-histidine biosynthesis; L-histidine from 5-phospho-alpha-D-ribose 1-diphosphate: step 4/9. The polypeptide is 1-(5-phosphoribosyl)-5-[(5-phosphoribosylamino)methylideneamino] imidazole-4-carboxamide isomerase (Bacillus thuringiensis subsp. konkukian (strain 97-27)).